The sequence spans 177 residues: O-acetyl-ADP-ribose deacetylase (177 aa).

A Macro domain is found at 1–175 (MNSRIHVIHG…LYQRLLTQQG (175 aa)). Substrate-binding positions include 11 to 12 (DI), Asn-25, 33 to 35 (GVD), and 122 to 126 (STGVY). The Proton acceptor role is filled by Asp-35.

Belongs to the MacroD-type family. YmdB subfamily. As to quaternary structure, homodimer. Interacts with RNase III.

It carries out the reaction 3''-O-acetyl-ADP-D-ribose + H2O = ADP-D-ribose + acetate + H(+). It catalyses the reaction 2''-O-acetyl-ADP-D-ribose + H2O = ADP-D-ribose + acetate + H(+). Functionally, deacetylates O-acetyl-ADP ribose to yield ADP-ribose and free acetate. Down-regulates ribonuclease 3 (RNase III) activity. Acts by interacting directly with the region of the ribonuclease that is required for dimerization/activation. This Citrobacter rodentium (strain ICC168) (Citrobacter freundii biotype 4280) protein is O-acetyl-ADP-ribose deacetylase.